We begin with the raw amino-acid sequence, 1111 residues long: Receptor-type guanylate cyclase gcy-7 (1111 aa).

Residues Met-1–Pro-24 form the signal peptide. Residues Gln-25–Leu-488 are Extracellular-facing. Asn-80, Asn-300, Asn-326, Asn-353, Asn-389, Asn-407, Asn-430, and Asn-441 each carry an N-linked (GlcNAc...) asparagine glycan. A helical transmembrane segment spans residues Ile-489 to Ile-509. At Tyr-510–Asp-1111 the chain is on the cytoplasmic side. Residues Gln-536–Asn-838 enclose the Protein kinase domain. ATP contacts are provided by residues Lys-542 to Arg-550 and Lys-568. Positions Thr-896–Glu-1026 constitute a Guanylate cyclase domain.

It belongs to the adenylyl cyclase class-4/guanylyl cyclase family. As to expression, expressed asymmetrically in ASE left (ASEL) sensory neuron. Expressed in excretory canal cell.

It is found in the cell membrane. The catalysed reaction is GTP = 3',5'-cyclic GMP + diphosphate. Guanylate cyclase involved in the production of the second messenger cGMP. Unlike other guanylate cyclases expressed in ASE neurons, may not play a role in chemotaxis responses toward salt ions in ASEL (ASE left) sensory neurons. This Caenorhabditis elegans protein is Receptor-type guanylate cyclase gcy-7.